The chain runs to 337 residues: Probable tyrosine--tRNA ligase, cytoplasmic (337 aa).

Tyr-35 contacts L-tyrosine. The 'HIGH' region motif lies at 40 to 48; that stretch reads ITGKPHIAY. 4 residues coordinate L-tyrosine: Tyr-162, Gln-166, Asp-169, and Gln-184. Positions 218 to 222 match the 'KMSKS' region motif; it reads KMSSS.

It belongs to the class-I aminoacyl-tRNA synthetase family. As to quaternary structure, homodimer.

The protein resides in the cytoplasm. It carries out the reaction tRNA(Tyr) + L-tyrosine + ATP = L-tyrosyl-tRNA(Tyr) + AMP + diphosphate + H(+). The chain is Probable tyrosine--tRNA ligase, cytoplasmic from Encephalitozoon cuniculi (strain GB-M1) (Microsporidian parasite).